Reading from the N-terminus, the 181-residue chain is Transcriptional repressor NrdR (181 aa).

The segment at 3 to 34 (CPFCRHPDSRVVDSREAEEGSAIRRRRSCLSC) is a zinc-finger region. Residues 46–136 (LQVRKRSGAA…VYLAFESLTD (91 aa)) form the ATP-cone domain. The disordered stretch occupies residues 148–181 (AAGPPTTRDGPARPVPRGAVDVSPVIGTQQVHSR).

This sequence belongs to the NrdR family. The cofactor is Zn(2+).

Its function is as follows. Negatively regulates transcription of bacterial ribonucleotide reductase nrd genes and operons by binding to NrdR-boxes. This chain is Transcriptional repressor NrdR, found in Frankia casuarinae (strain DSM 45818 / CECT 9043 / HFP020203 / CcI3).